A 242-amino-acid chain; its full sequence is Caffeoyl-CoA O-methyltransferase 2 (242 aa).

Lys-16 is a binding site for substrate. Residues Thr-58, Glu-80, 82–83 (GV), Ser-88, Asp-106, and Ala-135 each bind S-adenosyl-L-methionine. A substrate-binding site is contributed by Asp-158. A divalent metal cation is bound at residue Asp-158. An S-adenosyl-L-methionine-binding site is contributed by Asp-160. Residues Asp-184 and Asn-185 each contribute to the a divalent metal cation site. Residue Asn-189 coordinates substrate.

This sequence belongs to the class I-like SAM-binding methyltransferase superfamily. Cation-dependent O-methyltransferase family. CCoAMT subfamily. A divalent metal cation serves as cofactor. In terms of tissue distribution, mostly expressed in petal limbs and tubes, and, at low levels, in stems, roots and leaves.

Its subcellular location is the cytoplasm. It localises to the cytosol. It carries out the reaction (E)-caffeoyl-CoA + S-adenosyl-L-methionine = (E)-feruloyl-CoA + S-adenosyl-L-homocysteine + H(+). The catalysed reaction is (E)-5-hydroxyferuloyl-CoA + S-adenosyl-L-methionine = (E)-sinapoyl-CoA + S-adenosyl-L-homocysteine + H(+). Its pathway is aromatic compound metabolism; phenylpropanoid biosynthesis. Its function is as follows. Involved in the production of floral volatile phenylpropanoids in flowers of fragrant cultivars (e.g. cv. Mitchell and cv. V26) from cinnamic acid, a common precursor with the anthocyanin biosynthesis pathway involved in flower pigmentation. Methylates caffeoyl-CoA to feruloyl-CoA, also able to methylate 5-hydroxyferuloyl-CoA. This Petunia hybrida (Petunia) protein is Caffeoyl-CoA O-methyltransferase 2.